The sequence spans 402 residues: Formate-dependent phosphoribosylglycinamide formyltransferase (402 aa).

Residues 25–26 (EL) and Glu-85 each bind N(1)-(5-phospho-beta-D-ribosyl)glycinamide. ATP is bound by residues Arg-118, Lys-159, 164–169 (SSGKGQ), 199–202 (EQFV), and Glu-207. Residues 123–318 (RLASEELGLP…EFELHAKAVL (196 aa)) enclose the ATP-grasp domain. Residues Glu-277 and Glu-289 each coordinate Mg(2+). N(1)-(5-phospho-beta-D-ribosyl)glycinamide is bound by residues Asp-296, Lys-365, and 372–373 (RR).

It belongs to the PurK/PurT family. Homodimer.

It catalyses the reaction N(1)-(5-phospho-beta-D-ribosyl)glycinamide + formate + ATP = N(2)-formyl-N(1)-(5-phospho-beta-D-ribosyl)glycinamide + ADP + phosphate + H(+). Its pathway is purine metabolism; IMP biosynthesis via de novo pathway; N(2)-formyl-N(1)-(5-phospho-D-ribosyl)glycinamide from N(1)-(5-phospho-D-ribosyl)glycinamide (formate route): step 1/1. In terms of biological role, involved in the de novo purine biosynthesis. Catalyzes the transfer of formate to 5-phospho-ribosyl-glycinamide (GAR), producing 5-phospho-ribosyl-N-formylglycinamide (FGAR). Formate is provided by PurU via hydrolysis of 10-formyl-tetrahydrofolate. The protein is Formate-dependent phosphoribosylglycinamide formyltransferase of Corynebacterium efficiens (strain DSM 44549 / YS-314 / AJ 12310 / JCM 11189 / NBRC 100395).